We begin with the raw amino-acid sequence, 894 residues long: Bifunctional enzyme RhaA/RhaB (894 aa).

The rhamnulokinase stretch occupies residues 1–465 (MGEYRLAVDI…TAFPVTYFLP (465 aa)). Residues 466-894 (QRSESHVSSR…KRESEKAKQR (429 aa)) form an L-rhamnose isomerase region. Residues His730, Asp762, and Asp764 each coordinate Mn(2+).

In the N-terminal section; belongs to the rhamnulokinase family. The protein in the C-terminal section; belongs to the rhamnose isomerase family. Requires Mn(2+) as cofactor.

Its subcellular location is the cytoplasm. It carries out the reaction L-rhamnulose + ATP = L-rhamnulose 1-phosphate + ADP + H(+). It catalyses the reaction L-rhamnopyranose = L-rhamnulose. It participates in carbohydrate degradation; L-rhamnose degradation; glycerone phosphate from L-rhamnose: step 1/3. It functions in the pathway carbohydrate degradation; L-rhamnose degradation; glycerone phosphate from L-rhamnose: step 2/3. In Shouchella clausii (strain KSM-K16) (Alkalihalobacillus clausii), this protein is Bifunctional enzyme RhaA/RhaB (rhaAB).